The primary structure comprises 231 residues: Ribose-5-phosphate isomerase A (231 aa).

Residues 28 to 31 (TGST), 83 to 86 (DGAD), and 96 to 99 (KGGG) contribute to the substrate site. The Proton acceptor role is filled by Glu105. Substrate is bound at residue Lys123.

It belongs to the ribose 5-phosphate isomerase family. As to quaternary structure, homodimer.

The enzyme catalyses aldehydo-D-ribose 5-phosphate = D-ribulose 5-phosphate. It participates in carbohydrate degradation; pentose phosphate pathway; D-ribose 5-phosphate from D-ribulose 5-phosphate (non-oxidative stage): step 1/1. Functionally, catalyzes the reversible conversion of ribose-5-phosphate to ribulose 5-phosphate. The chain is Ribose-5-phosphate isomerase A from Sinorhizobium medicae (strain WSM419) (Ensifer medicae).